The chain runs to 705 residues: 1,4-alpha-glucan branching enzyme GlgB (705 aa).

The Nucleophile role is filled by Asp-309. Glu-360 acts as the Proton donor in catalysis. Residues 654-705 (VQVERAADPRPNEQQRLVAETPAHEGGRSAPADAAESAEQKPDDEQKGGKKA) form a disordered region. The span at 691–705 (AEQKPDDEQKGGKKA) shows a compositional bias: basic and acidic residues.

This sequence belongs to the glycosyl hydrolase 13 family. GlgB subfamily. As to quaternary structure, monomer.

The catalysed reaction is Transfers a segment of a (1-&gt;4)-alpha-D-glucan chain to a primary hydroxy group in a similar glucan chain.. It participates in glycan biosynthesis; glycogen biosynthesis. In terms of biological role, catalyzes the formation of the alpha-1,6-glucosidic linkages in glycogen by scission of a 1,4-alpha-linked oligosaccharide from growing alpha-1,4-glucan chains and the subsequent attachment of the oligosaccharide to the alpha-1,6 position. This chain is 1,4-alpha-glucan branching enzyme GlgB, found in Deinococcus radiodurans (strain ATCC 13939 / DSM 20539 / JCM 16871 / CCUG 27074 / LMG 4051 / NBRC 15346 / NCIMB 9279 / VKM B-1422 / R1).